The sequence spans 246 residues: Large ribosomal subunit protein uL2 (246 aa).

A disordered region spans residues 197–226 (SPYAHPHGGGSHPKGGTPVPKTAPPGQKVG).

The protein belongs to the universal ribosomal protein uL2 family. As to quaternary structure, part of the 50S ribosomal subunit. Forms a bridge to the 30S subunit in the 70S ribosome.

In terms of biological role, one of the primary rRNA binding proteins. Required for association of the 30S and 50S subunits to form the 70S ribosome, for tRNA binding and peptide bond formation. It has been suggested to have peptidyltransferase activity; this is somewhat controversial. Makes several contacts with the 16S rRNA in the 70S ribosome. This is Large ribosomal subunit protein uL2 from Pyrobaculum islandicum (strain DSM 4184 / JCM 9189 / GEO3).